A 693-amino-acid polypeptide reads, in one-letter code: MTEGEIPWGPTGELVYNRTYSRVKPDGTRETWPETVERVVSGNLALVDSRYQLPGEREDLLRLMREFKILPAGRHLWASGVKNAQHLFNCWVSGWTEKPSDHFEFTFMRLMEGGGVGANYSNRFLADYPHVKQELEVHIVCDEDHDDYADLAEAGQLSSRYDSDWVDAFVIEDSREGWAAALVDLIDTHYRDDVAHKERVYDVSRVRAAGRKLKTFGGTASGPVPLAKMLTEVSEILSRCAREGEQYRFEDGGALTGLDAMEIDHAIAQCVVAGGVRRSARMAMMHWADWQVETFTNIKQDSGSHWTTNISVEVDDAFWSLAKAPVDPLNPRSTKAHRVLKALSEGAVRNGEPGMWDSSLSNVGEPNEVVCTNPCGEITLEPWEPCNLGHINLAAFVTDAGKTDYIDLIRAHRLMTRFLIRATFSAVADPKSREVLDRNRRIGVGHLGVASYLALTGRRYSQAPGDKRFTAFLREMAAEVDRAAEEFSHELRIPVPVKKRTVAPTGTIAKMPGVSEGIHPIFSRYFIRRIRFSVLDNDQFLTASQYAADGYHVEKDQYDKSGNTWVVEIPTKDTLVEAVAARFGRDAEDIVESANELTLHQLLAFQALYQTCWADNAVSFTANVDPDAYEGVDVAADLQRFSGLIKGSTIFPEESFPQAPYERITKQQYEAAAIKAVADGVDEECANGACPIK.

C90 and C386 are disulfide-bonded. Catalysis depends on residues C375 and E377.

It belongs to the class II ribonucleoside-triphosphate reductase family. The cofactor is adenosylcob(III)alamin.

The enzyme catalyses a 2'-deoxyribonucleoside 5'-triphosphate + [thioredoxin]-disulfide + H2O = a ribonucleoside 5'-triphosphate + [thioredoxin]-dithiol. In Mycobacterium phage D29 (Mycobacteriophage D29), this protein is Putative adenosylcobalamin-dependent ribonucleoside-triphosphate reductase (50).